The primary structure comprises 166 residues: Orotate phosphoribosyltransferase (166 aa).

5-phospho-alpha-D-ribose 1-diphosphate contacts are provided by residues arginine 83, lysine 84, arginine 86, histidine 88, and 108 to 116; that span reads EDVVTTGNS. Orotate contacts are provided by threonine 112 and arginine 140.

The protein belongs to the purine/pyrimidine phosphoribosyltransferase family. PyrE subfamily. Homodimer. Mg(2+) is required as a cofactor.

It catalyses the reaction orotidine 5'-phosphate + diphosphate = orotate + 5-phospho-alpha-D-ribose 1-diphosphate. It participates in pyrimidine metabolism; UMP biosynthesis via de novo pathway; UMP from orotate: step 1/2. Catalyzes the transfer of a ribosyl phosphate group from 5-phosphoribose 1-diphosphate to orotate, leading to the formation of orotidine monophosphate (OMP). This is Orotate phosphoribosyltransferase from Thermoplasma volcanium (strain ATCC 51530 / DSM 4299 / JCM 9571 / NBRC 15438 / GSS1).